A 317-amino-acid polypeptide reads, in one-letter code: Transcription factor EC (317 aa).

The tract at residues 1-90 (MTFDCRVCDQ…GLTDAPCPSI (90 aa)) is necessary for transcriptional transactivation. The 54-residue stretch at 110–163 (QKKDNHNLIERRRRYNINYRIKELGTLIPKSNDPDMRWNKGTILKASVDYIKWL) folds into the bHLH domain. The tract at residues 242–317 (TSPEFYEQAV…SLSSEDGDEL (76 aa)) is necessary for transcriptional transactivation.

It belongs to the MiT/TFE family. As to quaternary structure, homodimer. Forms heterodimers with MITF. Interacts with MITF. Forms heterodimers with TFE3. Expressed in osteoclast-like cells (at protein level). Expressed in cells of the mononuclear phagocyte lineage. Expressed in macrophages and in osteoclast-like cells.

It localises to the nucleus. Its function is as follows. Transcriptional regulator that acts as a repressor or an activator. Acts as a transcriptional transactivator on the proximal promoter region of the tartrate-resistant acid phosphatase (TRAP) E-box containing promoter. Collaborates with MITF in target gene activation. Acts as a transcriptional repressor on minimal promoter containing element F (that includes an E-box sequence). Binds to element F in an E-box sequence-specific manner. Acts as a transcriptional repressor on minimal promoter containing mu E3 enhancer sequence. Binds to mu E3 DNA sequence of the immunoglobulin heavy-chain gene enhancer. Binds DNA in a homo- or heterodimeric form. In Mus musculus (Mouse), this protein is Transcription factor EC (Tfec).